The chain runs to 176 residues: ATP-dependent protease subunit HslV (176 aa).

Thr-2 is a catalytic residue. Residues Gly-157, Cys-160, and Thr-163 each coordinate Na(+).

The protein belongs to the peptidase T1B family. HslV subfamily. A double ring-shaped homohexamer of HslV is capped on each side by a ring-shaped HslU homohexamer. The assembly of the HslU/HslV complex is dependent on binding of ATP.

The protein resides in the cytoplasm. It carries out the reaction ATP-dependent cleavage of peptide bonds with broad specificity.. Its activity is regulated as follows. Allosterically activated by HslU binding. Its function is as follows. Protease subunit of a proteasome-like degradation complex believed to be a general protein degrading machinery. The polypeptide is ATP-dependent protease subunit HslV (Salmonella gallinarum (strain 287/91 / NCTC 13346)).